Consider the following 399-residue polypeptide: Enoyl-[acyl-carrier-protein] reductase [NADH] (399 aa).

NAD(+) contacts are provided by residues 49-54 (GASSGY), 75-76 (FE), 112-113 (DA), and 141-142 (LA). Tyr-227 is a binding site for substrate. The active-site Proton donor is Tyr-237. NAD(+) is bound by residues Lys-246 and 272-274 (VVT).

Belongs to the TER reductase family. In terms of assembly, monomer.

It carries out the reaction a 2,3-saturated acyl-[ACP] + NAD(+) = a (2E)-enoyl-[ACP] + NADH + H(+). It participates in lipid metabolism; fatty acid biosynthesis. Functionally, involved in the final reduction of the elongation cycle of fatty acid synthesis (FAS II). Catalyzes the reduction of a carbon-carbon double bond in an enoyl moiety that is covalently linked to an acyl carrier protein (ACP). The polypeptide is Enoyl-[acyl-carrier-protein] reductase [NADH] (Pseudomonas putida (strain W619)).